The following is a 380-amino-acid chain: Flagellar P-ring protein (380 aa).

Residues 1–35 (MRFFTQSPFPLRTLTRRLTAFVCVGLLLLPGFTLA) form the signal peptide.

This sequence belongs to the FlgI family. As to quaternary structure, the basal body constitutes a major portion of the flagellar organelle and consists of four rings (L,P,S, and M) mounted on a central rod.

Its subcellular location is the periplasm. The protein localises to the bacterial flagellum basal body. Functionally, assembles around the rod to form the L-ring and probably protects the motor/basal body from shearing forces during rotation. The polypeptide is Flagellar P-ring protein (Gluconobacter oxydans (strain 621H) (Gluconobacter suboxydans)).